Reading from the N-terminus, the 368-residue chain is Hydrophobic dipeptide epimerase (368 aa).

Substrate is bound by residues Thr-143 and 168–170 (KIK). Mg(2+)-binding residues include Asp-197, Glu-225, and Asp-253. Substrate is bound by residues Lys-277 and 329 to 331 (DMD).

It belongs to the mandelate racemase/muconate lactonizing enzyme family. It depends on Mg(2+) as a cofactor.

In terms of biological role, catalyzes the epimerization of various hydrophobic dipeptides, such as L-Ala-L-Phe. Has epimerase activity with L-Ala-L-Thr, L-Ala-L-Met, L-Ala-L-Tyr, as well as L-Phe-L-Met, L-Phe-L-Ser and L-Phe-L-Thr (in vitro). In Citrifermentans bemidjiense (strain ATCC BAA-1014 / DSM 16622 / JCM 12645 / Bem) (Geobacter bemidjiensis), this protein is Hydrophobic dipeptide epimerase.